Here is a 456-residue protein sequence, read N- to C-terminus: uncharacterized protein (456 aa).

In terms of domain architecture, TRAM spans 2-60 (AMRKGKEYELNIEEIEFPSMGIAYHEGLKVYVKHGIPGQKVLARITTKKKDHAKGKIIE). Positions 73, 79, 82, and 162 each coordinate [4Fe-4S] cluster. Positions 288, 317, 338, and 383 each coordinate S-adenosyl-L-methionine. The active-site Nucleophile is the cysteine 410.

It belongs to the class I-like SAM-binding methyltransferase superfamily. RNA M5U methyltransferase family.

This is an uncharacterized protein from Clostridium tetani (strain Massachusetts / E88).